The primary structure comprises 124 residues: ATP synthase epsilon chain (124 aa).

The protein belongs to the ATPase epsilon chain family. In terms of assembly, F-type ATPases have 2 components, CF(1) - the catalytic core - and CF(0) - the membrane proton channel. CF(1) has five subunits: alpha(3), beta(3), gamma(1), delta(1), epsilon(1). CF(0) has three main subunits: a, b and c.

It is found in the cell membrane. Produces ATP from ADP in the presence of a proton gradient across the membrane. The sequence is that of ATP synthase epsilon chain from Corynebacterium glutamicum (strain ATCC 13032 / DSM 20300 / JCM 1318 / BCRC 11384 / CCUG 27702 / LMG 3730 / NBRC 12168 / NCIMB 10025 / NRRL B-2784 / 534).